Consider the following 373-residue polypeptide: Core trichothecene cluster (CTC) protein 14 (373 aa).

This sequence belongs to the TRI14 family.

In terms of biological role, part of the core gene cluster that mediates the biosynthesis of trichothecenes, a very large family of chemically related bicyclic sesquiterpene compounds acting as mycotoxins, including T2-toxin. The biosynthesis of trichothecenes begins with the cyclization of farnesyl diphosphate to trichodiene and is catalyzed by the trichodiene synthase TRI5. Trichodiene undergoes a series of oxygenations catalyzed by the cytochrome P450 monooxygenase TRI4. TRI4 controls the addition of four oxygens at C-2, C-3, C-11, and the C-12, C-13-epoxide to form the intermediate isotrichotriol. Isotrichotriol then undergoes a non-enzymatic isomerization and cyclization to form isotrichodermol. During this process, the oxygen at the C-2 position becomes the pyran ring oxygen and the hydroxyl group at C-11 is lost. More complex type A trichothecenes are built by modifying isotrichodermol through a series of paired hydroxylation and acetylation or acylation steps. Isotrichodermol is converted to isotrichodermin by the acetyltransferase TRI101. TRI101 encodes a C-3 transacetylase that acts as a self-protection or resistance factor during biosynthesis and that the presence of a free C-3 hydroxyl group is a key component of Fusarium trichothecene phytotoxicity. A second hydroxyl group is added to C-15 by the trichothecene C-15 hydroxylase TRI11, producing 15-decalonectrin, which is then acetylated by TRI3, producing calonectrin. A third hydroxyl group is added at C-4 by the cytochrome P450 monooxygenase TRI13, converting calonectrin to 3,15-diacetoxyspirpenol, which is subsequently acetylated bythe acetyltransferase TRI7. A fourth hydroxyl group is added to C-8 by the cytochrome P450 monooxygenase TRI1, followed by the addition of an isovaleryl moiety by TRI16. Finally, the acetyl group is removed from the C-3 position by the trichothecene C-3 esterase TRI8 to produce T-2 toxin. The chain is Core trichothecene cluster (CTC) protein 14 from Fusarium sporotrichioides.